A 412-amino-acid chain; its full sequence is Light-independent protochlorophyllide reductase subunit N (412 aa).

Residues C17, C42, and C103 each contribute to the [4Fe-4S] cluster site.

This sequence belongs to the BchN/ChlN family. In terms of assembly, protochlorophyllide reductase is composed of three subunits; ChlL, ChlN and ChlB. Forms a heterotetramer of two ChlB and two ChlN subunits. Requires [4Fe-4S] cluster as cofactor.

It catalyses the reaction chlorophyllide a + oxidized 2[4Fe-4S]-[ferredoxin] + 2 ADP + 2 phosphate = protochlorophyllide a + reduced 2[4Fe-4S]-[ferredoxin] + 2 ATP + 2 H2O. Its pathway is porphyrin-containing compound metabolism; chlorophyll biosynthesis (light-independent). Functionally, component of the dark-operative protochlorophyllide reductase (DPOR) that uses Mg-ATP and reduced ferredoxin to reduce ring D of protochlorophyllide (Pchlide) to form chlorophyllide a (Chlide). This reaction is light-independent. The NB-protein (ChlN-ChlB) is the catalytic component of the complex. The polypeptide is Light-independent protochlorophyllide reductase subunit N (Synechococcus sp. (strain CC9902)).